Here is a 745-residue protein sequence, read N- to C-terminus: Polyribonucleotide nucleotidyltransferase (745 aa).

Positions 487 and 493 each coordinate Mg(2+). The 60-residue stretch at Pro554–Ile613 folds into the KH domain. Residues Gly623–Lys691 form the S1 motif domain. Residues Lys691–Asn745 are disordered. Positions Asn707–Asp719 are enriched in basic and acidic residues.

It belongs to the polyribonucleotide nucleotidyltransferase family. Mg(2+) is required as a cofactor.

The protein localises to the cytoplasm. It carries out the reaction RNA(n+1) + phosphate = RNA(n) + a ribonucleoside 5'-diphosphate. Functionally, involved in mRNA degradation. Catalyzes the phosphorolysis of single-stranded polyribonucleotides processively in the 3'- to 5'-direction. In Rickettsia massiliae (strain Mtu5), this protein is Polyribonucleotide nucleotidyltransferase.